Consider the following 200-residue polypeptide: Holliday junction branch migration complex subunit RuvA (200 aa).

The tract at residues 1–63 is domain I; that stretch reads MIASVRGEVL…EDSMTLYGFP (63 aa). The tract at residues 64–142 is domain II; that stretch reads DSESKELFGL…AVASTSGAVP (79 aa). The tract at residues 142–146 is flexible linker; that stretch reads PLGAG. The segment at 147–200 is domain III; that stretch reads GGGSVRDQIVEALVGLGFPAKQAEQAADSVLAEAPESTTSTALRSALSLLGKTR.

The protein belongs to the RuvA family. As to quaternary structure, homotetramer. Forms an RuvA(8)-RuvB(12)-Holliday junction (HJ) complex. HJ DNA is sandwiched between 2 RuvA tetramers; dsDNA enters through RuvA and exits via RuvB. An RuvB hexamer assembles on each DNA strand where it exits the tetramer. Each RuvB hexamer is contacted by two RuvA subunits (via domain III) on 2 adjacent RuvB subunits; this complex drives branch migration. In the full resolvosome a probable DNA-RuvA(4)-RuvB(12)-RuvC(2) complex forms which resolves the HJ.

The protein localises to the cytoplasm. In terms of biological role, the RuvA-RuvB-RuvC complex processes Holliday junction (HJ) DNA during genetic recombination and DNA repair, while the RuvA-RuvB complex plays an important role in the rescue of blocked DNA replication forks via replication fork reversal (RFR). RuvA specifically binds to HJ cruciform DNA, conferring on it an open structure. The RuvB hexamer acts as an ATP-dependent pump, pulling dsDNA into and through the RuvAB complex. HJ branch migration allows RuvC to scan DNA until it finds its consensus sequence, where it cleaves and resolves the cruciform DNA. The polypeptide is Holliday junction branch migration complex subunit RuvA (Rhodococcus jostii (strain RHA1)).